The chain runs to 335 residues: Methionine import ATP-binding protein MetN (335 aa).

One can recognise an ABC transporter domain in the interval 2–241 (IQFQRLHKSY…PKHATTRRFV (240 aa)). 38–45 (GHSGAGKS) provides a ligand contact to ATP.

It belongs to the ABC transporter superfamily. Methionine importer (TC 3.A.1.24) family. As to quaternary structure, the complex is composed of two ATP-binding proteins (MetN), two transmembrane proteins (MetI) and a solute-binding protein (MetQ).

It localises to the cell inner membrane. It carries out the reaction L-methionine(out) + ATP + H2O = L-methionine(in) + ADP + phosphate + H(+). The catalysed reaction is D-methionine(out) + ATP + H2O = D-methionine(in) + ADP + phosphate + H(+). In terms of biological role, part of the ABC transporter complex MetNIQ involved in methionine import. Responsible for energy coupling to the transport system. The chain is Methionine import ATP-binding protein MetN from Xanthomonas euvesicatoria pv. vesicatoria (strain 85-10) (Xanthomonas campestris pv. vesicatoria).